A 182-amino-acid chain; its full sequence is Protein SrpB (182 aa).

Helical transmembrane passes span 11–31 (WLGL…IGLN), 43–63 (TFTL…QAEG), 73–93 (LSRT…GLIL), and 116–136 (IWIT…LGLI).

It belongs to the MgtC/SapB family.

It localises to the cell membrane. The chain is Protein SrpB (srpB) from Synechococcus elongatus (strain ATCC 33912 / PCC 7942 / FACHB-805) (Anacystis nidulans R2).